We begin with the raw amino-acid sequence, 477 residues long: Salivary plasminogen activator alpha 2 (477 aa).

Positions 1–36 are cleaved as a signal peptide; that stretch reads MVNTMKTKLLCVLLLCGAVFSLPRQETYRQLARGSR. One can recognise a Fibronectin type-I domain in the interval 40–82; sequence VACRDEKTQMIYQQQESWLRPEVRSKRVEHCRCDRGLAQCHTV. 14 disulfides stabilise this stretch: cysteine 42–cysteine 72, cysteine 70–cysteine 79, cysteine 87–cysteine 98, cysteine 92–cysteine 109, cysteine 111–cysteine 120, cysteine 128–cysteine 209, cysteine 149–cysteine 191, cysteine 180–cysteine 204, cysteine 214–cysteine 345, cysteine 257–cysteine 273, cysteine 265–cysteine 334, cysteine 359–cysteine 434, cysteine 391–cysteine 407, and cysteine 424–cysteine 452. The region spanning 83–121 is the EGF-like domain; that stretch reads PVKSCSELRCFNGGTCWQAASFSDFVCQCPKGYTGKQCE. The Kringle domain maps to 128-209; it reads CYKDQGVTYR…ILEFCSVPVC (82 aa). N-linked (GlcNAc...) asparagine glycosylation is present at asparagine 185. The Peptidase S1 domain occupies 226-476; it reads STGGLFTDIT…YLGWIRDNMR (251 aa). Residues histidine 272 and aspartate 321 each act as charge relay system in the active site. A glycan (N-linked (GlcNAc...) asparagine) is linked at asparagine 398. Serine 428 serves as the catalytic Charge relay system.

Belongs to the peptidase S1 family. As to quaternary structure, monomer.

Its subcellular location is the secreted. It catalyses the reaction Specific cleavage of Arg-|-Val bond in plasminogen to form plasmin.. Activity toward plasminogen is stimulated in the presence of fibrin I. Functionally, probably essential to support the feeding habits of this exclusively haematophagous animal. Probable potent thrombolytic agent. This chain is Salivary plasminogen activator alpha 2, found in Desmodus rotundus (Vampire bat).